The primary structure comprises 213 residues: Pyridoxine/pyridoxamine 5'-phosphate oxidase (213 aa).

Substrate contacts are provided by residues 9-12 and Lys67; that span reads RKSY. FMN is bound by residues 62 to 67, 77 to 78, Arg83, and Lys84; these read RVVLIK and YT. Substrate-binding residues include Tyr124, Arg128, and Ser132. FMN contacts are provided by residues 141 to 142 and Trp185; that span reads QS. 191–193 contacts substrate; it reads RLH. FMN is bound at residue Arg195.

It belongs to the pyridoxamine 5'-phosphate oxidase family. Homodimer. FMN is required as a cofactor.

The enzyme catalyses pyridoxamine 5'-phosphate + O2 + H2O = pyridoxal 5'-phosphate + H2O2 + NH4(+). The catalysed reaction is pyridoxine 5'-phosphate + O2 = pyridoxal 5'-phosphate + H2O2. It functions in the pathway cofactor metabolism; pyridoxal 5'-phosphate salvage; pyridoxal 5'-phosphate from pyridoxamine 5'-phosphate: step 1/1. It participates in cofactor metabolism; pyridoxal 5'-phosphate salvage; pyridoxal 5'-phosphate from pyridoxine 5'-phosphate: step 1/1. In terms of biological role, catalyzes the oxidation of either pyridoxine 5'-phosphate (PNP) or pyridoxamine 5'-phosphate (PMP) into pyridoxal 5'-phosphate (PLP). In Methylibium petroleiphilum (strain ATCC BAA-1232 / LMG 22953 / PM1), this protein is Pyridoxine/pyridoxamine 5'-phosphate oxidase.